The chain runs to 419 residues: GTPase Obg (419 aa).

Positions 1–156 (MRFVDYVSIE…FYLDLQLKVM (156 aa)) constitute an Obg domain. The OBG-type G domain maps to 157–334 (ADIGLVGKPN…LEEKQKKLEI (178 aa)). GTP is bound by residues 163-170 (GKPNAGKS), 188-192 (FTTLV), 209-212 (DLPG), 278-281 (NKCD), and 315-317 (NII). Residues Ser-170 and Thr-190 each contribute to the Mg(2+) site. The 78-residue stretch at 342–419 (IEFNLKAPFL…RIYEFEFHWN (78 aa)) folds into the OCT domain.

Belongs to the TRAFAC class OBG-HflX-like GTPase superfamily. OBG GTPase family. As to quaternary structure, monomer. Mg(2+) is required as a cofactor.

The protein resides in the cytoplasm. Its function is as follows. An essential GTPase which binds GTP, GDP and possibly (p)ppGpp with moderate affinity, with high nucleotide exchange rates and a fairly low GTP hydrolysis rate. Plays a role in control of the cell cycle, stress response, ribosome biogenesis and in those bacteria that undergo differentiation, in morphogenesis control. This Mesomycoplasma hyopneumoniae (strain 232) (Mycoplasma hyopneumoniae) protein is GTPase Obg.